Consider the following 243-residue polypeptide: Zinc import ATP-binding protein ZnuC (243 aa).

The region spanning 25 to 242 is the ABC transporter domain; it reads LVVDSITLFY…AKFMSVFPEN (218 aa). 57–64 is an ATP binding site; that stretch reads GPNGGGKT.

This sequence belongs to the ABC transporter superfamily. Zinc importer (TC 3.A.1.15.5) family. The complex is composed of two ATP-binding proteins (ZnuC), two transmembrane proteins (ZnuB) and a solute-binding protein (ZnuA).

The protein resides in the cell inner membrane. It carries out the reaction Zn(2+)(out) + ATP(in) + H2O(in) = Zn(2+)(in) + ADP(in) + phosphate(in) + H(+)(in). Part of the ABC transporter complex ZnuABC involved in zinc import. Responsible for energy coupling to the transport system. This Anaplasma phagocytophilum (strain HZ) protein is Zinc import ATP-binding protein ZnuC.